Consider the following 443-residue polypeptide: Ribosomal protein uS12 methylthiotransferase RimO (443 aa).

One can recognise an MTTase N-terminal domain in the interval P5–P115. Residues C14, C50, C79, C147, C151, and C154 each contribute to the [4Fe-4S] cluster site. Positions L133–A374 constitute a Radical SAM core domain. Residues Q377–C443 enclose the TRAM domain.

This sequence belongs to the methylthiotransferase family. RimO subfamily. The cofactor is [4Fe-4S] cluster.

Its subcellular location is the cytoplasm. It catalyses the reaction L-aspartate(89)-[ribosomal protein uS12]-hydrogen + (sulfur carrier)-SH + AH2 + 2 S-adenosyl-L-methionine = 3-methylsulfanyl-L-aspartate(89)-[ribosomal protein uS12]-hydrogen + (sulfur carrier)-H + 5'-deoxyadenosine + L-methionine + A + S-adenosyl-L-homocysteine + 2 H(+). In terms of biological role, catalyzes the methylthiolation of an aspartic acid residue of ribosomal protein uS12. This chain is Ribosomal protein uS12 methylthiotransferase RimO, found in Actinobacillus pleuropneumoniae serotype 7 (strain AP76).